The sequence spans 175 residues: Cell division protein SepF (175 aa).

Over residues 20–29 (RYEDYDDYDD) the composition is skewed to acidic residues. The segment at 20–88 (RYEDYDDYDD…ERPTPPLRVT (69 aa)) is disordered. Composition is skewed to basic and acidic residues over residues 30-47 (AEPHRREPREAVERDLGS) and 54-73 (RRMDARESSPADPAELRRVS).

It belongs to the SepF family. Homodimer. Interacts with FtsZ.

The protein localises to the cytoplasm. Its function is as follows. Cell division protein that is part of the divisome complex and is recruited early to the Z-ring. Probably stimulates Z-ring formation, perhaps through the cross-linking of FtsZ protofilaments. Its function overlaps with FtsA. This Acidothermus cellulolyticus (strain ATCC 43068 / DSM 8971 / 11B) protein is Cell division protein SepF.